Consider the following 344-residue polypeptide: UDP-N-acetylenolpyruvoylglucosamine reductase (344 aa).

The region spanning 17-187 (VDYACSELIS…TGVGIKLAKK (171 aa)) is the FAD-binding PCMH-type domain. R163 is a catalytic residue. The active-site Proton donor is the S233. E329 is an active-site residue.

It belongs to the MurB family. FAD serves as cofactor.

The protein resides in the cytoplasm. It carries out the reaction UDP-N-acetyl-alpha-D-muramate + NADP(+) = UDP-N-acetyl-3-O-(1-carboxyvinyl)-alpha-D-glucosamine + NADPH + H(+). It functions in the pathway cell wall biogenesis; peptidoglycan biosynthesis. Its function is as follows. Cell wall formation. This Shewanella sediminis (strain HAW-EB3) protein is UDP-N-acetylenolpyruvoylglucosamine reductase.